Reading from the N-terminus, the 211-residue chain is Large ribosomal subunit protein bL25 (211 aa).

The interval 185–211 (ESTTPAATEGEETEAAAAAPEPAAEDK) is disordered. A compositionally biased stretch (low complexity) spans 199–211 (AAAAAPEPAAEDK).

The protein belongs to the bacterial ribosomal protein bL25 family. CTC subfamily. In terms of assembly, part of the 50S ribosomal subunit; part of the 5S rRNA/L5/L18/L25 subcomplex. Contacts the 5S rRNA. Binds to the 5S rRNA independently of L5 and L18.

Its function is as follows. This is one of the proteins that binds to the 5S RNA in the ribosome where it forms part of the central protuberance. This chain is Large ribosomal subunit protein bL25, found in Treponema denticola (strain ATCC 35405 / DSM 14222 / CIP 103919 / JCM 8153 / KCTC 15104).